The primary structure comprises 126 residues: Alpha-lactalbumin (126 aa).

One can recognise a C-type lysozyme domain in the interval 1-126; it reads KVFEKCELSQ…CIADLDQWKC (126 aa). Disulfide bonds link cysteine 6/cysteine 126, cysteine 30/cysteine 117, cysteine 63/cysteine 82, and cysteine 78/cysteine 96. N-linked (GlcNAc...) asparagine glycosylation occurs at asparagine 47. Lysine 84, aspartate 87, aspartate 89, aspartate 92, and aspartate 93 together coordinate Ca(2+).

This sequence belongs to the glycosyl hydrolase 22 family. As to quaternary structure, lactose synthase (LS) is a heterodimer of a catalytic component, beta1,4-galactosyltransferase (beta4Gal-T1) and a regulatory component, alpha-lactalbumin (LA). Mammary gland specific. Secreted in milk.

Its subcellular location is the secreted. In terms of biological role, regulatory subunit of lactose synthase, changes the substrate specificity of galactosyltransferase in the mammary gland making glucose a good acceptor substrate for this enzyme. This enables LS to synthesize lactose, the major carbohydrate component of milk. In other tissues, galactosyltransferase transfers galactose onto the N-acetylglucosamine of the oligosaccharide chains in glycoproteins. The protein is Alpha-lactalbumin (LALBA) of Tachyglossus aculeatus aculeatus (Southeast Australian short-beaked echidna).